The following is a 330-amino-acid chain: Zinc finger protein Gfi-1b (330 aa).

The tract at residues 1–20 is SNAG domain; the sequence is MPRSFLVKSKKAHTYHQPRV. Residues 1 to 42 are disordered; it reads MPRSFLVKSKKAHTYHQPRVQEDEPLWPPALTPVPRDQAPSN. Lys8 carries the post-translational modification N6,N6-dimethyllysine. The tract at residues 91–330 is interaction with ARIH2; sequence GDSPLSDSPP…RHRESQHNLK (240 aa). 6 consecutive C2H2-type zinc fingers follow at residues 163–186, 192–214, 220–242, 248–270, 276–298, and 304–327; these read YHCV…RRSH, FACD…THVH, FECR…LLIH, YPCQ…TYIH, HKCQ…SRKH, and FSCE…ESQH. Residues 164–330 form a mediates interaction with GATA1 region; the sequence is HCVKCNKVFS…RHRESQHNLK (167 aa).

Component of a RCOR-GFI-KDM1A-HDAC complex. Interacts directly with RCOR1, KDM1A and HDAC2. Forms a complex with GATA1. Interacts with histone methyltransferases EHMT2 and SUV39H1. Interacts with ARIH2 (via RING-type 2). Interacts with RUNX1T1. Methylation at Lys-8 in the SNAG domain seems required for the recruitment of the corepressor complex. In terms of tissue distribution, expressed in bone marrow and fetal liver, but also detectable in fetal spleen, fetal thymus, and testes. Detected in hematopoietic stem cells, erythroblasts, and megakaryocytes. Overexpressed in bone marrow of patients with erythroleukemia and megakaryocytic leukemia as well as in their corresponding leukemic cell lines, and markedly repressed in severe aplastic anemia (SAA).

Its subcellular location is the nucleus. Essential proto-oncogenic transcriptional regulator necessary for development and differentiation of erythroid and megakaryocytic lineages. Component of a RCOR-GFI-KDM1A-HDAC complex that suppresses, via histone deacetylase (HDAC) recruitment, a number of genes implicated in multilineage blood cell development and controls hematopoietic differentiation. Transcriptional repressor or activator depending on both promoter and cell type context; represses promoter activity of SOCS1 and SOCS3 and thus, may regulate cytokine signaling pathways. Cooperates with GATA1 to repress target gene transcription, such as the apoptosis regulator BCL2L1; GFI1B silencing in leukemic cell lines markedly increase apoptosis rate. Inhibits down-regulation of MYC and MYB as well as the cyclin-dependent kinase inhibitor CDKN1A/P21WAF1 in IL6-treated myelomonocytic cells. Represses expression of GATA3 in T-cell lymphomas and inhibits GATA1-mediated transcription; as GATA1 also mediates erythroid GFI1B transcription, both GATA1 and GFI1B participate in a feedback regulatory pathway controlling the expression of GFI1B gene in erythroid cells. Suppresses GATA1-mediated stimulation of GFI1B promoter through protein interaction. Binds to gamma-satellite DNA and to its own promoter, auto-repressing its own expression. Alters histone methylation by recruiting histone methyltransferase to target genes promoters. Plays a role in heterochromatin formation. The polypeptide is Zinc finger protein Gfi-1b (GFI1B) (Homo sapiens (Human)).